The chain runs to 313 residues: Aspartate carbamoyltransferase catalytic subunit (313 aa).

Carbamoyl phosphate-binding residues include arginine 58 and threonine 59. Residue lysine 86 coordinates L-aspartate. Carbamoyl phosphate-binding residues include arginine 108, histidine 136, and glutamine 139. The L-aspartate site is built by arginine 169 and arginine 223. Residues glycine 264 and proline 265 each contribute to the carbamoyl phosphate site.

This sequence belongs to the aspartate/ornithine carbamoyltransferase superfamily. ATCase family. Heterododecamer (2C3:3R2) of six catalytic PyrB chains organized as two trimers (C3), and six regulatory PyrI chains organized as three dimers (R2).

It catalyses the reaction carbamoyl phosphate + L-aspartate = N-carbamoyl-L-aspartate + phosphate + H(+). It functions in the pathway pyrimidine metabolism; UMP biosynthesis via de novo pathway; (S)-dihydroorotate from bicarbonate: step 2/3. In terms of biological role, catalyzes the condensation of carbamoyl phosphate and aspartate to form carbamoyl aspartate and inorganic phosphate, the committed step in the de novo pyrimidine nucleotide biosynthesis pathway. The protein is Aspartate carbamoyltransferase catalytic subunit of Chlorobium luteolum (strain DSM 273 / BCRC 81028 / 2530) (Pelodictyon luteolum).